The chain runs to 161 residues: Allophycocyanin alpha chain (161 aa).

The residue at position 71 (N71) is an N4-methylasparagine. C81 lines the (2R,3E)-phycocyanobilin pocket.

Belongs to the phycobiliprotein family. As to quaternary structure, heterodimer of an alpha and a beta chain. Post-translationally, contains one covalently linked phycocyanobilin chromophore.

The protein resides in the cellular thylakoid membrane. Functionally, light-harvesting photosynthetic bile pigment-protein from the phycobiliprotein complex. Allophycocyanin has a maximum absorption at approximately 650 nanometers. This chain is Allophycocyanin alpha chain (apcA), found in Synechocystis sp. (strain ATCC 27184 / PCC 6803 / Kazusa).